A 336-amino-acid chain; its full sequence is 4-hydroxy-3-methylbut-2-enyl diphosphate reductase (336 aa).

Cys-37 contacts [4Fe-4S] cluster. Residues His-66 and His-99 each coordinate (2E)-4-hydroxy-3-methylbut-2-enyl diphosphate. 2 residues coordinate dimethylallyl diphosphate: His-66 and His-99. His-66 and His-99 together coordinate isopentenyl diphosphate. Cys-121 is a [4Fe-4S] cluster binding site. His-149 lines the (2E)-4-hydroxy-3-methylbut-2-enyl diphosphate pocket. His-149 serves as a coordination point for dimethylallyl diphosphate. His-149 contacts isopentenyl diphosphate. Glu-151 functions as the Proton donor in the catalytic mechanism. Thr-189 lines the (2E)-4-hydroxy-3-methylbut-2-enyl diphosphate pocket. Cys-219 contacts [4Fe-4S] cluster. Residues Ser-247, Ser-248, Asn-249, and Ser-292 each coordinate (2E)-4-hydroxy-3-methylbut-2-enyl diphosphate. Dimethylallyl diphosphate contacts are provided by Ser-247, Ser-248, Asn-249, and Ser-292. Ser-247, Ser-248, Asn-249, and Ser-292 together coordinate isopentenyl diphosphate.

This sequence belongs to the IspH family. The cofactor is [4Fe-4S] cluster.

It carries out the reaction isopentenyl diphosphate + 2 oxidized [2Fe-2S]-[ferredoxin] + H2O = (2E)-4-hydroxy-3-methylbut-2-enyl diphosphate + 2 reduced [2Fe-2S]-[ferredoxin] + 2 H(+). The enzyme catalyses dimethylallyl diphosphate + 2 oxidized [2Fe-2S]-[ferredoxin] + H2O = (2E)-4-hydroxy-3-methylbut-2-enyl diphosphate + 2 reduced [2Fe-2S]-[ferredoxin] + 2 H(+). The protein operates within isoprenoid biosynthesis; dimethylallyl diphosphate biosynthesis; dimethylallyl diphosphate from (2E)-4-hydroxy-3-methylbutenyl diphosphate: step 1/1. It participates in isoprenoid biosynthesis; isopentenyl diphosphate biosynthesis via DXP pathway; isopentenyl diphosphate from 1-deoxy-D-xylulose 5-phosphate: step 6/6. In terms of biological role, catalyzes the conversion of 1-hydroxy-2-methyl-2-(E)-butenyl 4-diphosphate (HMBPP) into a mixture of isopentenyl diphosphate (IPP) and dimethylallyl diphosphate (DMAPP). Acts in the terminal step of the DOXP/MEP pathway for isoprenoid precursor biosynthesis. The sequence is that of 4-hydroxy-3-methylbut-2-enyl diphosphate reductase from Rhodococcus opacus (strain B4).